The chain runs to 439 residues: Deacetylvindoline O-acetyltransferase (439 aa).

Catalysis depends on histidine 158, which acts as the Proton acceptor. Positions threonine 317–glutamine 344 form a coiled coil. Aspartate 380 functions as the Proton acceptor in the catalytic mechanism.

Belongs to the plant acyltransferase family. In terms of assembly, monomer. As to expression, predominantly expressed in young leaves of mature plants. Low expression in stems and flowers and not detected in roots. Confined to the laticifer and idioblast cells of leaves, stems, and flower buds.

The protein localises to the cytoplasm. Its subcellular location is the nucleus. The catalysed reaction is 4-O-deacetylvindoline + acetyl-CoA = vindoline + CoA. It functions in the pathway alkaloid biosynthesis; vindoline biosynthesis. Involved in the biosynthesis of vindoline, a precursor of vinblastine and vincristine. The polypeptide is Deacetylvindoline O-acetyltransferase (Catharanthus roseus (Madagascar periwinkle)).